The sequence spans 240 residues: Pyridoxine 5'-phosphate synthase (240 aa).

N7 lines the 3-amino-2-oxopropyl phosphate pocket. 9 to 10 lines the 1-deoxy-D-xylulose 5-phosphate pocket; sequence DH. R18 provides a ligand contact to 3-amino-2-oxopropyl phosphate. The active-site Proton acceptor is the H43. Residues R45 and H50 each coordinate 1-deoxy-D-xylulose 5-phosphate. E70 (proton acceptor) is an active-site residue. T100 provides a ligand contact to 1-deoxy-D-xylulose 5-phosphate. H191 (proton donor) is an active-site residue. Residues G192 and 213 to 214 contribute to the 3-amino-2-oxopropyl phosphate site; that span reads GH.

This sequence belongs to the PNP synthase family. As to quaternary structure, homooctamer; tetramer of dimers.

The protein resides in the cytoplasm. The catalysed reaction is 3-amino-2-oxopropyl phosphate + 1-deoxy-D-xylulose 5-phosphate = pyridoxine 5'-phosphate + phosphate + 2 H2O + H(+). It functions in the pathway cofactor biosynthesis; pyridoxine 5'-phosphate biosynthesis; pyridoxine 5'-phosphate from D-erythrose 4-phosphate: step 5/5. In terms of biological role, catalyzes the complicated ring closure reaction between the two acyclic compounds 1-deoxy-D-xylulose-5-phosphate (DXP) and 3-amino-2-oxopropyl phosphate (1-amino-acetone-3-phosphate or AAP) to form pyridoxine 5'-phosphate (PNP) and inorganic phosphate. In Coxiella burnetii (strain Dugway 5J108-111), this protein is Pyridoxine 5'-phosphate synthase.